A 120-amino-acid polypeptide reads, in one-letter code: Ribonuclease P protein component 2 (120 aa).

The protein belongs to the eukaryotic/archaeal RNase P protein component 2 family. In terms of assembly, consists of a catalytic RNA component and at least 4-5 protein subunits. Forms a subcomplex with Rnp3 which stimulates the catalytic RNA.

Its subcellular location is the cytoplasm. The enzyme catalyses Endonucleolytic cleavage of RNA, removing 5'-extranucleotides from tRNA precursor.. Part of ribonuclease P, a protein complex that generates mature tRNA molecules by cleaving their 5'-ends. The RNA is catalytic, but its KM for pre-tRNA is 170-fold decreased in the presence of the 4 known protein subunits (Rnp1-4). The protein subunits also decrease the amount of Mg(2+) needed for activity. This is Ribonuclease P protein component 2 from Pyrococcus furiosus (strain ATCC 43587 / DSM 3638 / JCM 8422 / Vc1).